Reading from the N-terminus, the 83-residue chain is Exodeoxyribonuclease 7 small subunit (83 aa).

This sequence belongs to the XseB family. In terms of assembly, heterooligomer composed of large and small subunits.

The protein localises to the cytoplasm. It carries out the reaction Exonucleolytic cleavage in either 5'- to 3'- or 3'- to 5'-direction to yield nucleoside 5'-phosphates.. Functionally, bidirectionally degrades single-stranded DNA into large acid-insoluble oligonucleotides, which are then degraded further into small acid-soluble oligonucleotides. The chain is Exodeoxyribonuclease 7 small subunit from Rhodopseudomonas palustris (strain HaA2).